A 358-amino-acid chain; its full sequence is Protein FAM187B (358 aa).

The signal sequence occupies residues 1–17 (MLATLWLVGLSLPMLWA). Topologically, residues 18–322 (QRLISCPYKN…DKADSVLRRL (305 aa)) are extracellular. Asn127 carries N-linked (GlcNAc...) asparagine glycosylation. A helical transmembrane segment spans residues 323 to 343 (KLMVLSISVLAVGGLLCKVVF). At 344-358 (RPVCGKKRSQVLLVK) the chain is on the cytoplasmic side.

It belongs to the FAM187 family.

The protein resides in the membrane. In Mus musculus (Mouse), this protein is Protein FAM187B (Fam187b).